Reading from the N-terminus, the 220-residue chain is 7-cyano-7-deazaguanine synthase (220 aa).

7–17 (LSGGLDSAVCL) is an ATP binding site. The Zn(2+) site is built by Cys-191, Cys-199, Cys-202, and Cys-205.

The protein belongs to the QueC family. Homodimer. Requires Zn(2+) as cofactor.

The catalysed reaction is 7-carboxy-7-deazaguanine + NH4(+) + ATP = 7-cyano-7-deazaguanine + ADP + phosphate + H2O + H(+). It participates in purine metabolism; 7-cyano-7-deazaguanine biosynthesis. Catalyzes the ATP-dependent conversion of 7-carboxy-7-deazaguanine (CDG) to 7-cyano-7-deazaguanine (preQ(0)). The protein is 7-cyano-7-deazaguanine synthase of Desulforudis audaxviator (strain MP104C).